We begin with the raw amino-acid sequence, 238 residues long: Probable transglycosylase SceD 3 (238 aa).

The first 27 residues, 1-27, serve as a signal peptide directing secretion; that stretch reads MKKTVVASTLAVGLGVTGFAAGNSADA. Residues 82 to 161 are disordered; it reads YGQGSTNAPA…SEASEGSSVN (80 aa). The span at 89 to 156 shows a compositional bias: low complexity; sequence APAQETAEQP…NESSSSEASE (68 aa).

It belongs to the transglycosylase family. SceD subfamily.

It is found in the secreted. In terms of biological role, is able to cleave peptidoglycan and affects clumping and separation of bacterial cells. The chain is Probable transglycosylase SceD 3 (sceD3) from Staphylococcus saprophyticus subsp. saprophyticus (strain ATCC 15305 / DSM 20229 / NCIMB 8711 / NCTC 7292 / S-41).